The primary structure comprises 349 residues: Protein RecA (349 aa).

71 to 75 lines the phosphate pocket; sequence SSGKT. Residues 71–76 and 102–105 each bind ATP; these read SSGKTT and DPEY. Gln196 contributes to the phosphate binding site.

It belongs to the RecA family. In terms of assembly, polymerizes non-specifically on ssDNA to form filaments. Interacts with and activates LexA leading to autocatalytic cleavage of LexA, which derepresses the SOS regulon and activates DNA repair.

It is found in the cytoplasm. Its function is as follows. Required for homologous recombination (HR) and the bypass of mutagenic DNA lesions (double strand breaks, DSB) by the SOS response. Can catalyze the hydrolysis of ATP in the presence of single-stranded DNA, the ATP-dependent uptake of single-stranded DNA by duplex DNA, and the ATP-dependent hybridization of homologous single-stranded DNAs. Numerous X-ray crystals have been resolved under different conditions which indicate the flexibility of the protein, essential to its function. Gln-196 contributes to this plasticity by acting as a switch residue, which transmits the effect of nucleotide binding to the DNA-binding region. In Mycolicibacterium smegmatis (strain ATCC 700084 / mc(2)155) (Mycobacterium smegmatis), this protein is Protein RecA.